Here is a 713-residue protein sequence, read N- to C-terminus: Phosphoribosylformylglycinamidine synthase subunit PurL (713 aa).

A compositionally biased stretch (basic and acidic residues) spans 1–17; sequence MSLSPSDRELVTEELGR. Positions 1–20 are disordered; the sequence is MSLSPSDRELVTEELGREPT. H34 is an active-site residue. Y37 is an ATP binding site. E85 provides a ligand contact to Mg(2+). Residues 86-89 and R108 contribute to the substrate site; that span reads SHNH. H87 functions as the Proton acceptor in the catalytic mechanism. Mg(2+) is bound at residue D109. Q233 contacts substrate. Residue D261 coordinates Mg(2+). 305 to 307 is a substrate binding site; the sequence is ESQ. Residues D480 and G517 each contribute to the ATP site. A Mg(2+)-binding site is contributed by N518. S520 lines the substrate pocket.

It belongs to the FGAMS family. Monomer. Part of the FGAM synthase complex composed of 1 PurL, 1 PurQ and 2 PurS subunits.

Its subcellular location is the cytoplasm. It carries out the reaction N(2)-formyl-N(1)-(5-phospho-beta-D-ribosyl)glycinamide + L-glutamine + ATP + H2O = 2-formamido-N(1)-(5-O-phospho-beta-D-ribosyl)acetamidine + L-glutamate + ADP + phosphate + H(+). The protein operates within purine metabolism; IMP biosynthesis via de novo pathway; 5-amino-1-(5-phospho-D-ribosyl)imidazole from N(2)-formyl-N(1)-(5-phospho-D-ribosyl)glycinamide: step 1/2. Its function is as follows. Part of the phosphoribosylformylglycinamidine synthase complex involved in the purines biosynthetic pathway. Catalyzes the ATP-dependent conversion of formylglycinamide ribonucleotide (FGAR) and glutamine to yield formylglycinamidine ribonucleotide (FGAM) and glutamate. The FGAM synthase complex is composed of three subunits. PurQ produces an ammonia molecule by converting glutamine to glutamate. PurL transfers the ammonia molecule to FGAR to form FGAM in an ATP-dependent manner. PurS interacts with PurQ and PurL and is thought to assist in the transfer of the ammonia molecule from PurQ to PurL. The polypeptide is Phosphoribosylformylglycinamidine synthase subunit PurL (Natronomonas pharaonis (strain ATCC 35678 / DSM 2160 / CIP 103997 / JCM 8858 / NBRC 14720 / NCIMB 2260 / Gabara) (Halobacterium pharaonis)).